A 359-amino-acid polypeptide reads, in one-letter code: Nicotinate-nucleotide--dimethylbenzimidazole phosphoribosyltransferase (359 aa).

Glutamate 318 acts as the Proton acceptor in catalysis.

It belongs to the CobT family. Homodimer.

It carries out the reaction 5,6-dimethylbenzimidazole + nicotinate beta-D-ribonucleotide = alpha-ribazole 5'-phosphate + nicotinate + H(+). It participates in nucleoside biosynthesis; alpha-ribazole biosynthesis; alpha-ribazole from 5,6-dimethylbenzimidazole: step 1/2. Functionally, catalyzes the synthesis of alpha-ribazole-5'-phosphate from nicotinate mononucleotide (NAMN) and 5,6-dimethylbenzimidazole (DMB). The polypeptide is Nicotinate-nucleotide--dimethylbenzimidazole phosphoribosyltransferase (Escherichia coli (strain ATCC 8739 / DSM 1576 / NBRC 3972 / NCIMB 8545 / WDCM 00012 / Crooks)).